Reading from the N-terminus, the 502-residue chain is Protein DETOXIFICATION 49 (502 aa).

12 helical membrane passes run 41 to 61, 75 to 95, 123 to 143, 153 to 173, 190 to 210, 216 to 236, 267 to 287, 293 to 313, 338 to 358, 372 to 392, 414 to 434, and 439 to 459; these read LPLI…MLFL, LALG…SIGM, LLCS…LLFF, AEIF…LHPI, AFFA…SLGL, ALGA…YIVF, VSVC…GLLL, VASM…PSSL, RTGL…ALMV, IVKL…GNCP, LCCF…FSGF, and LWLG…VVLA.

The protein belongs to the multi antimicrobial extrusion (MATE) (TC 2.A.66.1) family.

The protein resides in the membrane. This Arabidopsis thaliana (Mouse-ear cress) protein is Protein DETOXIFICATION 49.